Reading from the N-terminus, the 257-residue chain is UPF0246 protein Rsph17029_0026 (257 aa).

It belongs to the UPF0246 family.

This Cereibacter sphaeroides (strain ATCC 17029 / ATH 2.4.9) (Rhodobacter sphaeroides) protein is UPF0246 protein Rsph17029_0026.